The chain runs to 465 residues: Ribulose bisphosphate carboxylase large chain (465 aa).

K4 is modified (N6,N6,N6-trimethyllysine). Substrate is bound by residues N113 and T163. K165 serves as the catalytic Proton acceptor. K167 contributes to the substrate binding site. Mg(2+)-binding residues include K191, D193, and E194. Position 191 is an N6-carboxylysine (K191). The Proton acceptor role is filled by H284. The substrate site is built by R285, H317, and S369.

It belongs to the RuBisCO large chain family. Type I subfamily. In terms of assembly, heterohexadecamer of 8 large chains and 8 small chains; disulfide-linked. The disulfide link is formed within the large subunit homodimers. Mg(2+) serves as cofactor. The disulfide bond which can form in the large chain dimeric partners within the hexadecamer appears to be associated with oxidative stress and protein turnover.

It is found in the plastid. It localises to the chloroplast. The enzyme catalyses 2 (2R)-3-phosphoglycerate + 2 H(+) = D-ribulose 1,5-bisphosphate + CO2 + H2O. It catalyses the reaction D-ribulose 1,5-bisphosphate + O2 = 2-phosphoglycolate + (2R)-3-phosphoglycerate + 2 H(+). Functionally, ruBisCO catalyzes two reactions: the carboxylation of D-ribulose 1,5-bisphosphate, the primary event in carbon dioxide fixation, as well as the oxidative fragmentation of the pentose substrate in the photorespiration process. Both reactions occur simultaneously and in competition at the same active site. This is Ribulose bisphosphate carboxylase large chain from Bauera rubioides (Dog rose).